We begin with the raw amino-acid sequence, 150 residues long: MQIILLEKVVNLGNLGDVVRVKDGYARNFLIPNKQARRATDSAIKEFEARRAELEKLAAEKLAAAQAEGEKLNGLTLQLSQKAGVDGRLFGSVTNHDIADALVAQGFKVEKAQVRMPNGPLKTVGDHPVVVSLHTDVAVDVTVLVQGDAV.

It belongs to the bacterial ribosomal protein bL9 family.

Its function is as follows. Binds to the 23S rRNA. The polypeptide is Large ribosomal subunit protein bL9 (Ralstonia pickettii (strain 12J)).